The chain runs to 198 residues: MAKILVLYYSMYGHIETMAHAVAEGAKKVDGAEVIIKRVPETMPPEIFAKAGGKTQNAPVATPQELADYDAIIFGTPTRFGNMSGQMRTFLDQTGGLWASGALYGKLGSVFSSTGTGGGQEQTITSTWTTLAHHGMVIVPIGYAAQELFDVSQVRGGTPYGATTIAGGDGSRQPSQEELSIARYQGEYVAGLAVKLNG.

One can recognise a Flavodoxin-like domain in the interval 4–189 (ILVLYYSMYG…SIARYQGEYV (186 aa)). Residues 10-15 (SMYGHI) and 78-80 (TRF) contribute to the FMN site. Y12 serves as a coordination point for NAD(+). W98 is a binding site for substrate. FMN contacts are provided by residues 113–118 (STGTGG) and H133.

It belongs to the WrbA family. Requires FMN as cofactor.

It carries out the reaction a quinone + NADH + H(+) = a quinol + NAD(+). It catalyses the reaction a quinone + NADPH + H(+) = a quinol + NADP(+). The protein is NAD(P)H dehydrogenase (quinone) of Salmonella agona (strain SL483).